We begin with the raw amino-acid sequence, 545 residues long: Membrane protein insertase YidC (545 aa).

Helical transmembrane passes span Ala-10–Ser-30, Leu-319–Pro-339, Trp-341–Phe-361, Leu-407–Val-427, Ile-467–Ser-487, and Met-502–Ile-522.

This sequence belongs to the OXA1/ALB3/YidC family. Type 1 subfamily. Interacts with the Sec translocase complex via SecD. Specifically interacts with transmembrane segments of nascent integral membrane proteins during membrane integration.

It localises to the cell inner membrane. In terms of biological role, required for the insertion and/or proper folding and/or complex formation of integral membrane proteins into the membrane. Involved in integration of membrane proteins that insert both dependently and independently of the Sec translocase complex, as well as at least some lipoproteins. Aids folding of multispanning membrane proteins. This chain is Membrane protein insertase YidC, found in Borrelia hermsii (strain HS1 / DAH).